A 184-amino-acid polypeptide reads, in one-letter code: Protein FAM89A (184 aa).

Residues 148-184 (YFQEQNSLHDRRDRGPPRDLSLPVSSLSSSDWILESI) are disordered. The segment covering 154–164 (SLHDRRDRGPP) has biased composition (basic and acidic residues). Residues 167–184 (LSLPVSSLSSSDWILESI) are compositionally biased toward low complexity.

Belongs to the FAM89 family.

The chain is Protein FAM89A (FAM89A) from Homo sapiens (Human).